A 268-amino-acid polypeptide reads, in one-letter code: Thiazole synthase (268 aa).

The active-site Schiff-base intermediate with DXP is K100. 1-deoxy-D-xylulose 5-phosphate is bound by residues G161, 187–188 (AG), and 209–210 (NT). The interval 248 to 268 (ASPSSPAEGMFTGTQHPAANS) is disordered. Over residues 259-268 (TGTQHPAANS) the composition is skewed to polar residues.

The protein belongs to the ThiG family. In terms of assembly, homotetramer. Forms heterodimers with either ThiH or ThiS.

Its subcellular location is the cytoplasm. The catalysed reaction is [ThiS sulfur-carrier protein]-C-terminal-Gly-aminoethanethioate + 2-iminoacetate + 1-deoxy-D-xylulose 5-phosphate = [ThiS sulfur-carrier protein]-C-terminal Gly-Gly + 2-[(2R,5Z)-2-carboxy-4-methylthiazol-5(2H)-ylidene]ethyl phosphate + 2 H2O + H(+). It participates in cofactor biosynthesis; thiamine diphosphate biosynthesis. Catalyzes the rearrangement of 1-deoxy-D-xylulose 5-phosphate (DXP) to produce the thiazole phosphate moiety of thiamine. Sulfur is provided by the thiocarboxylate moiety of the carrier protein ThiS. In vitro, sulfur can be provided by H(2)S. The chain is Thiazole synthase from Nitrosomonas europaea (strain ATCC 19718 / CIP 103999 / KCTC 2705 / NBRC 14298).